Consider the following 437-residue polypeptide: UDP-N-acetylmuramate--L-alanine ligase (437 aa).

114-120 (GTHGKTS) contacts ATP.

Belongs to the MurCDEF family.

The protein localises to the cytoplasm. It carries out the reaction UDP-N-acetyl-alpha-D-muramate + L-alanine + ATP = UDP-N-acetyl-alpha-D-muramoyl-L-alanine + ADP + phosphate + H(+). It participates in cell wall biogenesis; peptidoglycan biosynthesis. Cell wall formation. This Lactobacillus helveticus (strain DPC 4571) protein is UDP-N-acetylmuramate--L-alanine ligase.